The sequence spans 626 residues: Probable metalloendopeptidase G1-type (626 aa).

Histidine 42 contributes to the Zn(2+) binding site. The active site involves glutamate 45. Histidine 46 serves as a coordination point for Zn(2+).

Belongs to the peptidase M44 family. It depends on Zn(2+) as a cofactor.

Its function is as follows. Seems to be involved in viral proteins maturation by cleavage at Ala-Gly-|-Xaa motifs. In Fowlpox virus (strain NVSL) (FPV), this protein is Probable metalloendopeptidase G1-type.